The sequence spans 395 residues: Flap endonuclease 1 (395 aa).

An N-domain region spans residues Met1–Ala108. Asp34 contributes to the Mg(2+) binding site. Residue Arg74 participates in DNA binding. Mg(2+) contacts are provided by Asp90, Glu162, Glu164, Asp183, and Asp185. An I-domain region spans residues Met126–Tyr257. Glu162 lines the DNA pocket. DNA is bound by residues Gly235 and Asp237. Asp237 serves as a coordination point for Mg(2+). Positions Thr340–Phe348 are interaction with PCNA.

It belongs to the XPG/RAD2 endonuclease family. FEN1 subfamily. Interacts with PCNA. Three molecules of FEN1 bind to one PCNA trimer with each molecule binding to one PCNA monomer. PCNA stimulates the nuclease activity without altering cleavage specificity. It depends on Mg(2+) as a cofactor. In terms of processing, phosphorylated. Phosphorylation upon DNA damage induces relocalization to the nuclear plasma.

The protein localises to the nucleus. The protein resides in the nucleolus. Its subcellular location is the nucleoplasm. It localises to the mitochondrion. Its function is as follows. Structure-specific nuclease with 5'-flap endonuclease and 5'-3' exonuclease activities involved in DNA replication and repair. During DNA replication, cleaves the 5'-overhanging flap structure that is generated by displacement synthesis when DNA polymerase encounters the 5'-end of a downstream Okazaki fragment. It enters the flap from the 5'-end and then tracks to cleave the flap base, leaving a nick for ligation. Also involved in the long patch base excision repair (LP-BER) pathway, by cleaving within the apurinic/apyrimidinic (AP) site-terminated flap. Acts as a genome stabilization factor that prevents flaps from equilibrating into structures that lead to duplications and deletions. Also possesses 5'-3' exonuclease activity on nicked or gapped double-stranded DNA, and exhibits RNase H activity. Also involved in replication and repair of rDNA and in repairing mitochondrial DNA. In Leishmania braziliensis, this protein is Flap endonuclease 1.